The primary structure comprises 228 residues: Triosephosphate isomerase (228 aa).

Substrate is bound at residue 9-11; it reads NFK. The Electrophile role is filled by His-93. Residue Glu-141 is the Proton acceptor of the active site. Substrate contacts are provided by residues Ile-146, Gly-180, and 201–202; that span reads AS.

Belongs to the triosephosphate isomerase family. Homotetramer; dimer of dimers.

The protein localises to the cytoplasm. The enzyme catalyses D-glyceraldehyde 3-phosphate = dihydroxyacetone phosphate. It participates in carbohydrate biosynthesis; gluconeogenesis. Its pathway is carbohydrate degradation; glycolysis; D-glyceraldehyde 3-phosphate from glycerone phosphate: step 1/1. Functionally, involved in the gluconeogenesis. Catalyzes stereospecifically the conversion of dihydroxyacetone phosphate (DHAP) to D-glyceraldehyde-3-phosphate (G3P). The protein is Triosephosphate isomerase of Metallosphaera sedula (strain ATCC 51363 / DSM 5348 / JCM 9185 / NBRC 15509 / TH2).